Reading from the N-terminus, the 882-residue chain is Translation initiation factor IF-2 (882 aa).

A disordered region spans residues 28–294 (GIRKSADDSV…SSLQQGFQKP (267 aa)). Residues 67–81 (STLNIPGTGGKSKSV) are compositionally biased toward polar residues. Over residues 92-209 (VKRDPQEAER…RMAEENKWTD (118 aa)) the composition is skewed to basic and acidic residues. A compositionally biased stretch (basic residues) spans 244–258 (GRGRNAKAARPKKGN). A compositionally biased stretch (basic and acidic residues) spans 259 to 272 (KHAESKADREEARA). The 170-residue stretch at 381 to 550 (PRAPVVTIMG…LLQAEVLELK (170 aa)) folds into the tr-type G domain. Residues 390–397 (GHVDHGKT) are G1. 390-397 (GHVDHGKT) contributes to the GTP binding site. The segment at 415–419 (GITQH) is G2. The G3 stretch occupies residues 436–439 (DTPG). GTP contacts are provided by residues 436–440 (DTPGH) and 490–493 (NKID). Residues 490–493 (NKID) form a G4 region. The segment at 526–528 (SAK) is G5. The residue at position 800 (K800) is an N6-acetyllysine.

This sequence belongs to the TRAFAC class translation factor GTPase superfamily. Classic translation factor GTPase family. IF-2 subfamily.

The protein resides in the cytoplasm. Its function is as follows. One of the essential components for the initiation of protein synthesis. Protects formylmethionyl-tRNA from spontaneous hydrolysis and promotes its binding to the 30S ribosomal subunits. Also involved in the hydrolysis of GTP during the formation of the 70S ribosomal complex. The sequence is that of Translation initiation factor IF-2 from Shigella flexneri serotype 5b (strain 8401).